Reading from the N-terminus, the 290-residue chain is PIH1 domain-containing protein 1 (290 aa).

3 positions are modified to phosphoserine: Ser-12, Ser-16, and Ser-173.

It belongs to the PIH1 family. Component of the R2TP complex composed at least of RUVBL1, RUVBL2, RPAP3 and PIHD1. Component of the PAQosome complex which is responsible for the biogenesis of several protein complexes and which consists of R2TP complex members RUVBL1, RUVBL2, RPAP3 and PIH1D1, URI complex members PFDN2, PFDN6, PDRG1, UXT and URI1 as well as ASDURF, POLR2E and DNAAF10/WDR92. Interacts with phosphorylated TELO2 and mediates interaction of TELO2 with the R2TP complex. Interacts with phosphorylated ECD, EFTUD2/SNRP116, RPB1 and UBR5 and with RPB1 in a phosphorylation-independent manner. Interacts with the core C/D box snoRNP particle components NOP58 and FBL and with RUVBL1/TIP49. Interacts with RPAP3 and DNAAF10. Interacts with histone H4 and with SWI/SNF complex member SMARCB1/SNF5. Interacts with the mTORC1 complex member RPTOR. Interacts with MSL1.

Its subcellular location is the nucleus. Functionally, involved in the assembly of C/D box small nucleolar ribonucleoprotein (snoRNP) particles. Recruits the SWI/SNF complex to the core promoter of rRNA genes and enhances pre-rRNA transcription. Mediates interaction of TELO2 with the R2TP complex which is necessary for the stability of MTOR and SMG1. Positively regulates the assembly and activity of the mTORC1 complex. The polypeptide is PIH1 domain-containing protein 1 (Pih1d1) (Rattus norvegicus (Rat)).